The following is a 1260-amino-acid chain: Paraclostridial mosquitocidal protein 1 (1260 aa).

His-208 is a binding site for Zn(2+). Glu-209 (proton acceptor) is an active-site residue. Zn(2+)-binding residues include His-212 and Glu-248. Cys-395 and Cys-406 are oxidised to a cystine. The segment at 401-824 (NRVNICIDVN…NIQSIPDFDI (424 aa)) is translocation domain (TD). The tract at residues 825 to 1065 (NALIDRLGIQ…SYFNSNILRD (241 aa)) is HCN. The HCC stretch occupies residues 1066 to 1260 (FWGEPLEYNK…FVSEDEGWKE (195 aa)).

It belongs to the peptidase M27 family. Requires Zn(2+) as cofactor.

It catalyses the reaction Limited hydrolysis of proteins of the neuroexocytosis apparatus, synaptobrevins, SNAP25 or syntaxin. No detected action on small molecule substrates.. Its activity is regulated as follows. Preincubation with the metalloprotease inhibitor 1,10-phenanthroline before injection into Anopheles or Aedes decreases toxicity. Neurotoxin active against Anopheles but not Aedes mosquitoes upon oral ingestion; expression of the ptox operon (ntnh-orfX1-orfX2-orfX3-pmp1) in B.thuringiensis kills Anopheles but not Aedes mosquito 3rd instar larvae. The ntnh-pmp1 construct is about half as toxic. PMP1 is toxic when injected directly into Anopheles or Aedes mosquito 3rd instar larvae, larvae no longer move, suggesting they are paralyzed. Adult mosquitoes (Anopheles or Aedes) and Drosophila lose the ability to fly in a dose-dependent manner by 24 hours after injection with 100 pg neurotoxin. Not toxic upon injection in mice. Functionally, neurotoxin that cleaves A.gambiae syntaxin 1a, probably hydrolyzing the '240-Glu-|-His-241' bond. Does not cleave A.gambiae n-synaptobrevin or SNAP-25, nor human syntaxin 1A. In terms of biological role, responsible for host epithelial cell transcytosis, host nerve cell targeting and translocation of PMP1 light chain (LC) into host cytosol. Composed of 3 subdomains; the translocation domain (TD), and N-terminus and C-terminus of the receptor-binding domain (RBD), called HCN and HCC. This chain is Paraclostridial mosquitocidal protein 1, found in Paraclostridium bifermentans (Clostridium bifermentans).